We begin with the raw amino-acid sequence, 332 residues long: Ferredoxin--NADP reductase (332 aa).

FAD-binding residues include aspartate 33, glutamine 41, tyrosine 46, alanine 86, isoleucine 121, aspartate 282, and serine 325.

The protein belongs to the ferredoxin--NADP reductase type 2 family. In terms of assembly, homodimer. Requires FAD as cofactor.

It carries out the reaction 2 reduced [2Fe-2S]-[ferredoxin] + NADP(+) + H(+) = 2 oxidized [2Fe-2S]-[ferredoxin] + NADPH. The chain is Ferredoxin--NADP reductase from Metallosphaera sedula (strain ATCC 51363 / DSM 5348 / JCM 9185 / NBRC 15509 / TH2).